The following is a 251-amino-acid chain: Chlorocatechol 1,2-dioxygenase (251 aa).

The Fe cation site is built by Y130, Y164, H188, and H190.

It belongs to the intradiol ring-cleavage dioxygenase family. It depends on Fe(3+) as a cofactor.

It catalyses the reaction 3-chlorocatechol + O2 = (2E,4Z)-2-chloromuconate + 2 H(+). The enzyme catalyses 3,4-dichlorocatechol + O2 = (2Z,4Z)-2,3-dichloromuconate + 2 H(+). It carries out the reaction 3,5-dichlorocatechol + O2 = (2E,4E)-2,4-dichloromuconate + 2 H(+). The catalysed reaction is 3,6-dichlorocatechol + O2 = (2E,4E)-2,5-dichloromuconate + H(+). It catalyses the reaction 3,4,6-trichlorocatechol + O2 = (2Z,4E)-2,3,5-trichloromuconate + H(+). It participates in xenobiotic degradation. In terms of biological role, chlorocatechol 1,2-dioxygenase involved in the degradation of chlorinated benzenes, that occurs via chlorocatechol intermediates. Displays broad substrate specificity. Preferentially cleaves 3-chlorocatechol and 3,4-dichlorocatechol, and shows lower activity on 3,5-dichlorocatechol, 3,6-dichlorocatechol and 3,4,6-trichlorocatechol in vitro. Is not able to convert 3,4,5-trichlorocatechol and 3,4,5,6-tetrachlorocatechol. Thus, probably functions in the degradation pathways of 1,2-dichlorobenzene, 1,4-dichlorobenzene and 1,2,4-trichlorobenzene (via 3,4-dichlorocatechol, 3,6-dichlorocatechol and 3,4,6-trichlorocatechol intermediates, respectively), which allow Pseudomonas sp. strain P51 to grow on these substrates as the sole carbon and energy source. The polypeptide is Chlorocatechol 1,2-dioxygenase (Pseudomonas sp. (strain P51)).